We begin with the raw amino-acid sequence, 351 residues long: Palmitoyltransferase spe-10 (351 aa).

A run of 4 helical transmembrane segments spans residues 21-43 (TGWILTRCLNVLLFIQLILLWWS), 60-80 (IQATIYLIVGSFLFVMSMWSL), 198-218 (YFLLYIIYTSFLVYWYLLTSL), and 241-261 (LFSFIVGGVFGYYPLGELIIF). The region spanning 154–204 (KYCYECGHIKPDRARHCSSCGKCCIKYDHHCPWINMCVTHVNYKYFLLYII) is the DHHC domain.

It belongs to the DHHC palmitoyltransferase family. Expressed during spermatogenesis in budding and budded spermatids.

The protein localises to the membrane. The enzyme catalyses L-cysteinyl-[protein] + hexadecanoyl-CoA = S-hexadecanoyl-L-cysteinyl-[protein] + CoA. Involved in spermatogenesis, specifically in the morphogenesis of fibrous body-membranous organelles (FB-MO), which are Golgi-derived organelles used for transporting sperm-specific components, in spermatocytes and in their localization into budding spermatids. Required for the proper formation of spermatids and spermatozoa. In Caenorhabditis elegans, this protein is Palmitoyltransferase spe-10.